The following is a 308-amino-acid chain: Methionyl-tRNA formyltransferase (308 aa).

110–113 (SLLP) contributes to the (6S)-5,6,7,8-tetrahydrofolate binding site.

It belongs to the Fmt family.

It carries out the reaction L-methionyl-tRNA(fMet) + (6R)-10-formyltetrahydrofolate = N-formyl-L-methionyl-tRNA(fMet) + (6S)-5,6,7,8-tetrahydrofolate + H(+). Its function is as follows. Attaches a formyl group to the free amino group of methionyl-tRNA(fMet). The formyl group appears to play a dual role in the initiator identity of N-formylmethionyl-tRNA by promoting its recognition by IF2 and preventing the misappropriation of this tRNA by the elongation apparatus. This Neisseria gonorrhoeae (strain NCCP11945) protein is Methionyl-tRNA formyltransferase.